A 389-amino-acid polypeptide reads, in one-letter code: S-adenosylmethionine synthase (389 aa).

Residue histidine 15 coordinates ATP. Aspartate 17 contributes to the Mg(2+) binding site. Residue glutamate 43 coordinates K(+). L-methionine-binding residues include glutamate 56 and glutamine 99. The flexible loop stretch occupies residues glutamine 99–glutamate 109. ATP is bound by residues aspartate 166–lysine 168, arginine 234–phenylalanine 235, aspartate 243, arginine 249–lysine 250, alanine 266, and lysine 270. Residue aspartate 243 coordinates L-methionine. An L-methionine-binding site is contributed by lysine 274.

This sequence belongs to the AdoMet synthase family. Homotetramer; dimer of dimers. The cofactor is Mg(2+). K(+) serves as cofactor.

It is found in the cytoplasm. It catalyses the reaction L-methionine + ATP + H2O = S-adenosyl-L-methionine + phosphate + diphosphate. It functions in the pathway amino-acid biosynthesis; S-adenosyl-L-methionine biosynthesis; S-adenosyl-L-methionine from L-methionine: step 1/1. Its function is as follows. Catalyzes the formation of S-adenosylmethionine (AdoMet) from methionine and ATP. The overall synthetic reaction is composed of two sequential steps, AdoMet formation and the subsequent tripolyphosphate hydrolysis which occurs prior to release of AdoMet from the enzyme. This is S-adenosylmethionine synthase from Neisseria gonorrhoeae (strain ATCC 700825 / FA 1090).